A 263-amino-acid chain; its full sequence is 3'-5' ssDNA/RNA exonuclease TatD (263 aa).

Residues Glu-92, His-128, and His-153 each coordinate a divalent metal cation.

Belongs to the metallo-dependent hydrolases superfamily. TatD-type hydrolase family. TatD subfamily. As to quaternary structure, monomer. Mg(2+) is required as a cofactor.

Its subcellular location is the cytoplasm. In terms of biological role, 3'-5' exonuclease that prefers single-stranded DNA and RNA. May play a role in the H(2)O(2)-induced DNA damage repair. The chain is 3'-5' ssDNA/RNA exonuclease TatD from Rahnella sp. (strain Y9602).